The chain runs to 131 residues: Meiotically up-regulated gene 115 protein (131 aa).

Its subcellular location is the mitochondrion. It localises to the nucleus. In terms of biological role, has a role in meiosis. The sequence is that of Meiotically up-regulated gene 115 protein (mug115) from Schizosaccharomyces pombe (strain 972 / ATCC 24843) (Fission yeast).